Consider the following 423-residue polypeptide: Torsin-4A (423 aa).

Residues 47–68 are disordered; that stretch reads PGGGPDVGTGAPRPGCSPRAPR. Residues S63 and S81 each carry the phosphoserine modification. T89 is modified (phosphothreonine). S106 carries the post-translational modification Phosphoserine. A helical transmembrane segment spans residues 122–138; it reads CLLLLVAIVGFQVLNAI. 194-201 is a binding site for ATP; that stretch reads GPSGVGKS.

It belongs to the ClpA/ClpB family. Torsin subfamily.

It is found in the membrane. The chain is Torsin-4A (TOR4A) from Homo sapiens (Human).